A 223-amino-acid polypeptide reads, in one-letter code: Oxaloacetate tautomerase FAHD1, mitochondrial (223 aa).

Residues 1 to 30 constitute a mitochondrion transit peptide; that stretch reads MATSMIQRMFKQGTKIVCVGRNYAAHAKEL. Mg(2+)-binding residues include glutamate 67, glutamate 69, and aspartate 98.

This sequence belongs to the FAH family. Mg(2+) serves as cofactor. Mn(2+) is required as a cofactor.

Its subcellular location is the mitochondrion. It carries out the reaction oxaloacetate = enol-oxaloacetate. Its function is as follows. Tautomerase that converts enol-oxaloacetate, a strong inhibitor of succinate dehydrogenase, to the physiological keto form of oxaloacetate. The chain is Oxaloacetate tautomerase FAHD1, mitochondrial from Arabidopsis thaliana (Mouse-ear cress).